Reading from the N-terminus, the 314-residue chain is 2,3-dihydroxyphenylpropionate/2,3-dihydroxicinnamic acid 1,2-dioxygenase 1 (314 aa).

The active-site Proton donor is the His115. His179 serves as the catalytic Proton acceptor.

Belongs to the LigB/MhpB extradiol dioxygenase family. Homotetramer. It depends on Fe(2+) as a cofactor.

It carries out the reaction 3-(2,3-dihydroxyphenyl)propanoate + O2 = (2Z,4E)-2-hydroxy-6-oxonona-2,4-dienedioate + H(+). The catalysed reaction is (2E)-3-(2,3-dihydroxyphenyl)prop-2-enoate + O2 = (2Z,4E,7E)-2-hydroxy-6-oxonona-2,4,7-trienedioate + H(+). The protein operates within aromatic compound metabolism; 3-phenylpropanoate degradation. Its function is as follows. Catalyzes the non-heme iron(II)-dependent oxidative cleavage of 2,3-dihydroxyphenylpropionic acid and 2,3-dihydroxicinnamic acid into 2-hydroxy-6-ketononadienedioate and 2-hydroxy-6-ketononatrienedioate, respectively. In Pseudomonas putida (Arthrobacter siderocapsulatus), this protein is 2,3-dihydroxyphenylpropionate/2,3-dihydroxicinnamic acid 1,2-dioxygenase 1.